A 243-amino-acid chain; its full sequence is uncharacterized protein (243 aa).

The interval 71–120 is disordered; it reads KRTNVSQRNRKKGIKNNRPHKDINSSPDWGNAHRGTDWQSEKANGMNRAK. Positions 78 to 88 are enriched in basic residues; that stretch reads RNRKKGIKNNR. Serine 96 bears the Phosphoserine mark.

This is an uncharacterized protein from Saccharomyces cerevisiae (strain ATCC 204508 / S288c) (Baker's yeast).